The chain runs to 221 residues: Protein Thf1 (221 aa).

Residues 174–213 (TKERVEKDVNLYKSSLDKIEKALELIEMNIKDEKRRNKER) adopt a coiled-coil conformation.

This sequence belongs to the THF1 family.

Its function is as follows. May be involved in photosynthetic membrane biogenesis. The protein is Protein Thf1 of Prochlorococcus marinus (strain MIT 9211).